Here is a 443-residue protein sequence, read N- to C-terminus: Probable D-serine dehydratase (443 aa).

An N6-(pyridoxal phosphate)lysine modification is found at Lys118.

This sequence belongs to the serine/threonine dehydratase family. DsdA subfamily. It depends on pyridoxal 5'-phosphate as a cofactor.

The enzyme catalyses D-serine = pyruvate + NH4(+). The protein is Probable D-serine dehydratase of Vibrio campbellii (strain ATCC BAA-1116).